A 225-amino-acid chain; its full sequence is LHFPL tetraspan subfamily member 2a protein (225 aa).

The next 4 helical transmembrane spans lie at 11–31 (MLWTLLSIVAAFSELIAFLST), 99–119 (IFLAAGILLLCAVAFISIFTM), 129–149 (IFNVCGLLQAIAGLFLIVGLV), and 178–198 (AGWAFYTALAGTVLCFLCAVF).

It belongs to the LHFP family.

It localises to the membrane. Functionally, plays a role in fertility. Involved in distal reproductive tract development. The sequence is that of LHFPL tetraspan subfamily member 2a protein from Danio rerio (Zebrafish).